The sequence spans 204 residues: MKGSRSKQPEITPDMLLRAYSIGLFPMADSANDPELFWVEPEIRGVLPLDRFHVSHSLAKRIRKRPYEIRFDTAFEAVIEGCAKPAPGRPTTWINDKIRSLYAALHRMGYAHSVEAWEGDRLVGGLYGVSLGAAFFGESMFSLRTDASKICLVHLVERLRARHFQLLDTQFTTEHLKSFGAVDVPKAEYDLLLARAIASPNLEF.

The protein belongs to the L/F-transferase family.

It localises to the cytoplasm. The catalysed reaction is N-terminal L-lysyl-[protein] + L-leucyl-tRNA(Leu) = N-terminal L-leucyl-L-lysyl-[protein] + tRNA(Leu) + H(+). It catalyses the reaction N-terminal L-arginyl-[protein] + L-leucyl-tRNA(Leu) = N-terminal L-leucyl-L-arginyl-[protein] + tRNA(Leu) + H(+). It carries out the reaction L-phenylalanyl-tRNA(Phe) + an N-terminal L-alpha-aminoacyl-[protein] = an N-terminal L-phenylalanyl-L-alpha-aminoacyl-[protein] + tRNA(Phe). Its function is as follows. Functions in the N-end rule pathway of protein degradation where it conjugates Leu, Phe and, less efficiently, Met from aminoacyl-tRNAs to the N-termini of proteins containing an N-terminal arginine or lysine. The chain is Leucyl/phenylalanyl-tRNA--protein transferase from Sinorhizobium fredii (strain NBRC 101917 / NGR234).